Here is a 255-residue protein sequence, read N- to C-terminus: Imidazole glycerol phosphate synthase subunit HisF (255 aa).

Residues Asp11 and Asp130 contribute to the active site.

It belongs to the HisA/HisF family. As to quaternary structure, heterodimer of HisH and HisF.

The protein resides in the cytoplasm. It carries out the reaction 5-[(5-phospho-1-deoxy-D-ribulos-1-ylimino)methylamino]-1-(5-phospho-beta-D-ribosyl)imidazole-4-carboxamide + L-glutamine = D-erythro-1-(imidazol-4-yl)glycerol 3-phosphate + 5-amino-1-(5-phospho-beta-D-ribosyl)imidazole-4-carboxamide + L-glutamate + H(+). Its pathway is amino-acid biosynthesis; L-histidine biosynthesis; L-histidine from 5-phospho-alpha-D-ribose 1-diphosphate: step 5/9. Its function is as follows. IGPS catalyzes the conversion of PRFAR and glutamine to IGP, AICAR and glutamate. The HisF subunit catalyzes the cyclization activity that produces IGP and AICAR from PRFAR using the ammonia provided by the HisH subunit. This Maricaulis maris (strain MCS10) (Caulobacter maris) protein is Imidazole glycerol phosphate synthase subunit HisF.